The sequence spans 137 residues: Large ribosomal subunit protein uL16 (137 aa).

The disordered stretch occupies residues 1-22 (MLQPKRTKFRKQQKGRNRGLAH).

It belongs to the universal ribosomal protein uL16 family. As to quaternary structure, part of the 50S ribosomal subunit.

In terms of biological role, binds 23S rRNA and is also seen to make contacts with the A and possibly P site tRNAs. This is Large ribosomal subunit protein uL16 from Saccharophagus degradans (strain 2-40 / ATCC 43961 / DSM 17024).